We begin with the raw amino-acid sequence, 301 residues long: Protoheme IX farnesyltransferase 1 (301 aa).

Transmembrane regions (helical) follow at residues 29–49, 51–71, 101–121, 123–143, 150–170, 177–197, 223–243, 244–264, and 274–294; these read VVAL…PHAV, VQPL…AAAL, ALIF…SLVN, LTAW…TAYL, NIVI…TAVT, ALLL…ALAI, CILL…LVGM, CGPV…YKAW, and LAMQ…MALL.

Belongs to the UbiA prenyltransferase family. Protoheme IX farnesyltransferase subfamily.

The protein localises to the cell inner membrane. It catalyses the reaction heme b + (2E,6E)-farnesyl diphosphate + H2O = Fe(II)-heme o + diphosphate. It functions in the pathway porphyrin-containing compound metabolism; heme O biosynthesis; heme O from protoheme: step 1/1. In terms of biological role, converts heme B (protoheme IX) to heme O by substitution of the vinyl group on carbon 2 of heme B porphyrin ring with a hydroxyethyl farnesyl side group. This Shewanella baltica (strain OS195) protein is Protoheme IX farnesyltransferase 1.